Here is a 479-residue protein sequence, read N- to C-terminus: Baeyer-Villiger monooxygenase AacuH (479 aa).

Positions 14–34 (DSLGHPDGASRPPVSAESLSR) are disordered.

It belongs to the AflY oxidoreductase family.

It participates in secondary metabolite biosynthesis. Functionally, baeyer-Villiger monooxygenase; part of the gene cluster that mediates the biosynthesis of the tetrahydroxanthone dimer secalonic acid D. The pathway begins with the synthesis of atrochrysone thioester by the polyketide synthase AacuL. The atrochrysone carboxyl ACP thioesterase AacuM then breaks the thioester bond and releases the atrochrysone carboxylic acid from AacuL. Atrochrysone carboxylic acid is decarboxylated by the decarboxylase AacuI, and oxidized by the anthrone oxygenase AacuG to yield emodin. Emodin is then reduced to emodin hydroquinone by a yet unidentified oxidoreductase. A-ring reduction by the short chain dehydrogenase AacuN, dehydration by the scytalone dehydratase-like protein AacuK and probable spontaneous re-oxidation, results in overall deoxygenation to chrysophanol. Baeyer-Villiger oxidation by the Baeyer-Villiger monooxygenase (BVMO) AacuH then yields monodictyphenone. Monodictyphenone is transformed into compounds with the tetrahydroxanthone skeleton via methylesterification by the methyltransferase AacuQ, followed by the action of the flavin-dependent monooxygenase AacuC, the isomerase AacuP, and the short chain dehydrogenase/reductase AacuF or AacuD. AacuF and AacuD should accept the same compound as a substrate but perform the ketoreduction with a different stereoselectivity, thus yielding blennolides B and A, respectively. In the final step of the biosynthesis, the cytochrome P450 monooxygenase AacuE accepts blennolide B and/or blennolide A to conduct the dimerization reaction to furnish the tetrahydroxanthone dimers, secalonic acids D, B, and F. The chain is Baeyer-Villiger monooxygenase AacuH from Aspergillus aculeatus (strain ATCC 16872 / CBS 172.66 / WB 5094).